The sequence spans 496 residues: ATP synthase subunit beta 1 (496 aa).

167 to 174 provides a ligand contact to ATP; the sequence is GGAGVGKT. The interval 474-496 is disordered; it reads REAAAAQQSTAQQAAPAEKEPAA. The segment covering 476 to 489 has biased composition (low complexity); it reads AAAAQQSTAQQAAP.

The protein belongs to the ATPase alpha/beta chains family. As to quaternary structure, F-type ATPases have 2 components, CF(1) - the catalytic core - and CF(0) - the membrane proton channel. CF(1) has five subunits: alpha(3), beta(3), gamma(1), delta(1), epsilon(1). CF(0) has three main subunits: a(1), b(2) and c(9-12). The alpha and beta chains form an alternating ring which encloses part of the gamma chain. CF(1) is attached to CF(0) by a central stalk formed by the gamma and epsilon chains, while a peripheral stalk is formed by the delta and b chains.

It localises to the cell inner membrane. The catalysed reaction is ATP + H2O + 4 H(+)(in) = ADP + phosphate + 5 H(+)(out). Functionally, produces ATP from ADP in the presence of a proton gradient across the membrane. The catalytic sites are hosted primarily by the beta subunits. The protein is ATP synthase subunit beta 1 of Paraburkholderia xenovorans (strain LB400).